We begin with the raw amino-acid sequence, 397 residues long: Anhydro-N-acetylmuramic acid kinase (397 aa).

An ATP-binding site is contributed by 9-16 (GTSYDAID).

This sequence belongs to the anhydro-N-acetylmuramic acid kinase family.

It carries out the reaction 1,6-anhydro-N-acetyl-beta-muramate + ATP + H2O = N-acetyl-D-muramate 6-phosphate + ADP + H(+). Its pathway is amino-sugar metabolism; 1,6-anhydro-N-acetylmuramate degradation. It functions in the pathway cell wall biogenesis; peptidoglycan recycling. Its function is as follows. Catalyzes the specific phosphorylation of 1,6-anhydro-N-acetylmuramic acid (anhMurNAc) with the simultaneous cleavage of the 1,6-anhydro ring, generating MurNAc-6-P. Is required for the utilization of anhMurNAc either imported from the medium or derived from its own cell wall murein, and thus plays a role in cell wall recycling. This Rhodococcus erythropolis (strain PR4 / NBRC 100887) protein is Anhydro-N-acetylmuramic acid kinase.